Reading from the N-terminus, the 353-residue chain is WAT1-related protein At3g28100 (353 aa).

Helical transmembrane passes span 12 to 32 (AVFL…STLF), 43 to 63 (YAFL…SLFF), 81 to 101 (IGLL…GIEY), 105 to 125 (TLAS…AIIF), 137 to 157 (SVAK…VVLY), 187 to 207 (WLIG…SFIL), 219 to 239 (FTVS…IGLV), 252 to 272 (FDIT…YYVI), 283 to 303 (LYLA…SAVF), and 308 to 328 (LYLG…AVMW). The EamA domain maps to 27–155 (GISTLFKVAT…LSLIGALVVV (129 aa)).

The protein belongs to the drug/metabolite transporter (DMT) superfamily. Plant drug/metabolite exporter (P-DME) (TC 2.A.7.4) family.

The protein localises to the membrane. In Arabidopsis thaliana (Mouse-ear cress), this protein is WAT1-related protein At3g28100.